Here is a 758-residue protein sequence, read N- to C-terminus: DNA ligase (758 aa).

Residues 1 to 28 (MPENFGAMRQDGLVSTSESDSPAPAATP) are disordered. NAD(+) contacts are provided by residues 60-64 (DAEFD), 109-110 (SL), and E148. The active-site N6-AMP-lysine intermediate is K150. NAD(+) is bound by residues R171, E208, K324, and K348. Residues C442, C445, C461, and C467 each contribute to the Zn(2+) site. The region spanning 660–749 (SVRRTLAGLT…PDHSAEAEEN (90 aa)) is the BRCT domain. The interval 735-758 (LLAHGPDHSAEAEENESEGSTTND) is disordered.

It belongs to the NAD-dependent DNA ligase family. LigA subfamily. Mg(2+) serves as cofactor. It depends on Mn(2+) as a cofactor.

The catalysed reaction is NAD(+) + (deoxyribonucleotide)n-3'-hydroxyl + 5'-phospho-(deoxyribonucleotide)m = (deoxyribonucleotide)n+m + AMP + beta-nicotinamide D-nucleotide.. Functionally, DNA ligase that catalyzes the formation of phosphodiester linkages between 5'-phosphoryl and 3'-hydroxyl groups in double-stranded DNA using NAD as a coenzyme and as the energy source for the reaction. It is essential for DNA replication and repair of damaged DNA. This Renibacterium salmoninarum (strain ATCC 33209 / DSM 20767 / JCM 11484 / NBRC 15589 / NCIMB 2235) protein is DNA ligase.